Consider the following 185-residue polypeptide: Transcription termination/antitermination protein NusG (185 aa).

Residues 134–162 form the KOW domain; sequence PGQMVRVIDGPFNDFDGLVEEVNYEKNRL.

This sequence belongs to the NusG family.

Functionally, participates in transcription elongation, termination and antitermination. The protein is Transcription termination/antitermination protein NusG of Xylella fastidiosa (strain 9a5c).